The following is a 720-amino-acid chain: Proline-rich receptor-like protein kinase PERK12 (720 aa).

The interval 1–240 (MSDLGESPSS…GNGDGGGGGG (240 aa)) is disordered. Topologically, residues 1 to 246 (MSDLGESPSS…GGGGGYQGKT (246 aa)) are extracellular. Residues 10 to 25 (SSPPAPPADTAPPPET) show a composition bias toward pro residues. The span at 26-35 (PSENSALPPV) shows a compositional bias: low complexity. 2 stretches are compositionally biased toward pro residues: residues 52 to 84 (LSEPSTPPPDSQLPPLPSILPPLTDSPPPPSDS) and 92 to 116 (PSPPPPTSNESPSPPEDSETPPAPP). The N-linked (GlcNAc...) asparagine glycan is linked to Asn-117. Pro residues-rich tracts occupy residues 123 to 138 (NPPPSQDLQSPPPSSP) and 147 to 207 (PESP…PPKT). The helical transmembrane segment at 247–267 (MVGMAVAGFAIMALIGVVFLV) threads the bilayer. The Cytoplasmic portion of the chain corresponds to 268–720 (RRKKKRNIDS…ETRPFNNRRF (453 aa)). The interval 300–349 (QDPGKGYSSGPNGSMYNNSQQQQSSMGNSYGTAGGGYPHHQMQSSGTPDS) is disordered. Residues 311 to 330 (NGSMYNNSQQQQSSMGNSYG) are compositionally biased toward low complexity. The 254-residue stretch at 371-624 (FARKNILGEG…EVFRMIETAA (254 aa)) folds into the Protein kinase domain. ATP-binding positions include 377-385 (LGEGGFGCV) and Lys-399. At Tyr-444 the chain carries Phosphotyrosine. The Proton acceptor role is filled by Asp-495. Ser-528 is subject to Phosphoserine. Phosphothreonine occurs at positions 529 and 534. Phosphotyrosine is present on Tyr-542. Residues 698-720 (SAKSSSDFSGNESETRPFNNRRF) are disordered.

This sequence belongs to the protein kinase superfamily. Ser/Thr protein kinase family. Mostly expressed in apical parts, including flower buds, and particularly in anthers. Also present in root hairs.

It is found in the cell membrane. It catalyses the reaction L-seryl-[protein] + ATP = O-phospho-L-seryl-[protein] + ADP + H(+). The catalysed reaction is L-threonyl-[protein] + ATP = O-phospho-L-threonyl-[protein] + ADP + H(+). Functionally, regulates the auxin-related MAX (More Axillary Growth) pathway during the shoot branching. The chain is Proline-rich receptor-like protein kinase PERK12 (PERK12) from Arabidopsis thaliana (Mouse-ear cress).